A 64-amino-acid chain; its full sequence is Sperm protamine P1 (64 aa).

Residues 1–64 form a disordered region; that stretch reads MARYRHSRSR…SRRRRRRYYY (64 aa).

It belongs to the protamine P1 family. Testis.

It is found in the nucleus. It localises to the chromosome. Protamines substitute for histones in the chromatin of sperm during the haploid phase of spermatogenesis. They compact sperm DNA into a highly condensed, stable and inactive complex. This chain is Sperm protamine P1 (PRM1), found in Hypsiprymnodon moschatus (Musky rat kangaroo).